Reading from the N-terminus, the 295-residue chain is Elongation factor Ts (295 aa).

Positions threonine 79–valine 82 are involved in Mg(2+) ion dislocation from EF-Tu.

This sequence belongs to the EF-Ts family.

The protein localises to the cytoplasm. Functionally, associates with the EF-Tu.GDP complex and induces the exchange of GDP to GTP. It remains bound to the aminoacyl-tRNA.EF-Tu.GTP complex up to the GTP hydrolysis stage on the ribosome. This Bacillus cytotoxicus (strain DSM 22905 / CIP 110041 / 391-98 / NVH 391-98) protein is Elongation factor Ts.